The sequence spans 248 residues: Ubiquinone/menaquinone biosynthesis C-methyltransferase UbiE (248 aa).

Positions 68 and 92 each coordinate S-adenosyl-L-methionine.

Belongs to the class I-like SAM-binding methyltransferase superfamily. MenG/UbiE family.

It carries out the reaction a 2-demethylmenaquinol + S-adenosyl-L-methionine = a menaquinol + S-adenosyl-L-homocysteine + H(+). The catalysed reaction is a 2-methoxy-6-(all-trans-polyprenyl)benzene-1,4-diol + S-adenosyl-L-methionine = a 5-methoxy-2-methyl-3-(all-trans-polyprenyl)benzene-1,4-diol + S-adenosyl-L-homocysteine + H(+). It participates in quinol/quinone metabolism; menaquinone biosynthesis; menaquinol from 1,4-dihydroxy-2-naphthoate: step 2/2. The protein operates within cofactor biosynthesis; ubiquinone biosynthesis. In terms of biological role, methyltransferase required for the conversion of demethylmenaquinol (DMKH2) to menaquinol (MKH2) and the conversion of 2-polyprenyl-6-methoxy-1,4-benzoquinol (DDMQH2) to 2-polyprenyl-3-methyl-6-methoxy-1,4-benzoquinol (DMQH2). This is Ubiquinone/menaquinone biosynthesis C-methyltransferase UbiE from Rickettsia akari (strain Hartford).